The following is a 465-amino-acid chain: Cysteine--tRNA ligase (465 aa).

Cys-27 lines the Zn(2+) pocket. Residues 29–39 carry the 'HIGH' region motif; sequence PTVYDDAHLGH. Cys-207, His-237, and Glu-241 together coordinate Zn(2+). The short motif at 269-273 is the 'KMSKS' region element; sequence KMSKS. Lys-272 lines the ATP pocket.

Belongs to the class-I aminoacyl-tRNA synthetase family. As to quaternary structure, monomer. Zn(2+) is required as a cofactor.

The protein resides in the cytoplasm. It catalyses the reaction tRNA(Cys) + L-cysteine + ATP = L-cysteinyl-tRNA(Cys) + AMP + diphosphate. The chain is Cysteine--tRNA ligase from Helicobacter pylori (strain G27).